The following is a 163-amino-acid chain: NADH-quinone oxidoreductase subunit I (163 aa).

4Fe-4S ferredoxin-type domains follow at residues 53–83 and 94–123; these read LRRYPNGEERCIACKLCEAICPAQAITIEAG and VRYDIDMVKCIYCGFCQEACPVDAIVEGPN. Residues Cys63, Cys66, Cys69, Cys73, Cys103, Cys106, Cys109, and Cys113 each coordinate [4Fe-4S] cluster.

This sequence belongs to the complex I 23 kDa subunit family. NDH-1 is composed of 14 different subunits. Subunits NuoA, H, J, K, L, M, N constitute the membrane sector of the complex. [4Fe-4S] cluster is required as a cofactor.

It is found in the cell inner membrane. The enzyme catalyses a quinone + NADH + 5 H(+)(in) = a quinol + NAD(+) + 4 H(+)(out). Its function is as follows. NDH-1 shuttles electrons from NADH, via FMN and iron-sulfur (Fe-S) centers, to quinones in the respiratory chain. The immediate electron acceptor for the enzyme in this species is believed to be ubiquinone. Couples the redox reaction to proton translocation (for every two electrons transferred, four hydrogen ions are translocated across the cytoplasmic membrane), and thus conserves the redox energy in a proton gradient. This Brucella suis (strain ATCC 23445 / NCTC 10510) protein is NADH-quinone oxidoreductase subunit I.